We begin with the raw amino-acid sequence, 396 residues long: Acetate kinase (396 aa).

Asn8 lines the Mg(2+) pocket. Lys15 serves as a coordination point for ATP. Arg89 contributes to the substrate binding site. The Proton donor/acceptor role is filled by Asp146. Residues 206 to 210 (HIGNG), 283 to 285 (DMR), and 331 to 335 (GMGEN) contribute to the ATP site. Residue Glu383 participates in Mg(2+) binding.

The protein belongs to the acetokinase family. In terms of assembly, homodimer. Requires Mg(2+) as cofactor. Mn(2+) is required as a cofactor.

It localises to the cytoplasm. The enzyme catalyses acetate + ATP = acetyl phosphate + ADP. Its pathway is metabolic intermediate biosynthesis; acetyl-CoA biosynthesis; acetyl-CoA from acetate: step 1/2. Its function is as follows. Catalyzes the formation of acetyl phosphate from acetate and ATP. Can also catalyze the reverse reaction. The protein is Acetate kinase of Streptococcus uberis (strain ATCC BAA-854 / 0140J).